A 699-amino-acid polypeptide reads, in one-letter code: Elongation factor G (699 aa).

Residues 8-288 form the tr-type G domain; sequence EDYRNFGIMA…AVVDYLPSPI (281 aa). Residues 17 to 24, 86 to 90, and 140 to 143 contribute to the GTP site; these read AHIDAGKT, DTPGH, and NKMD.

Belongs to the TRAFAC class translation factor GTPase superfamily. Classic translation factor GTPase family. EF-G/EF-2 subfamily.

The protein localises to the cytoplasm. Functionally, catalyzes the GTP-dependent ribosomal translocation step during translation elongation. During this step, the ribosome changes from the pre-translocational (PRE) to the post-translocational (POST) state as the newly formed A-site-bound peptidyl-tRNA and P-site-bound deacylated tRNA move to the P and E sites, respectively. Catalyzes the coordinated movement of the two tRNA molecules, the mRNA and conformational changes in the ribosome. This is Elongation factor G from Rhizobium meliloti (strain 1021) (Ensifer meliloti).